Here is a 320-residue protein sequence, read N- to C-terminus: G-protein coupled receptor homolog FPV021 (320 aa).

Topologically, residues 1–18 (MDTDYGTVHTQQSVKGNT) are extracellular. A helical membrane pass occupies residues 19–39 (LILLIYFISFIVGFPGNCTVI). At 40–52 (WFTGYRWKKSVTT) the chain is on the cytoplasmic side. Residues 53–73 (IWFLNLAIADTLFVIFIPFEI) form a helical membrane-spanning segment. The Extracellular portion of the chain corresponds to 74–91 (TYILMGHYWPFGLFVCRI). A disulfide bridge links cysteine 89 with cysteine 167. Residues 92–112 (GSLMFNTGMYASIFFLTFISI) traverse the membrane as a helical segment. Residues 113–133 (DRYCLAFRRDICNKYRYRINI) are Cytoplasmic-facing. A helical membrane pass occupies residues 134-154 (MVMIIISWIISILLSTPYMYF). The Extracellular portion of the chain corresponds to 155-188 (KNTNEKYRNNRDCLEDYHSDNNTYLLRRVVFCIS). Residue asparagine 175 is glycosylated (N-linked (GlcNAc...) asparagine; by host). The helical transmembrane segment at 189 to 209 (LVMRYLVPSVVMLFCYCLLLF) threads the bilayer. Topologically, residues 210-222 (KHSLFLSKGQTYT) are cytoplasmic. The chain crosses the membrane as a helical span at residues 223 to 243 (IVIMITSFMVLWTPYNILYFI). Residues 244-260 (DVIGSHYYNADTIIDAA) are Extracellular-facing. The chain crosses the membrane as a helical span at residues 261–281 (PISISLIFLSSSINPMIYMLV). Residues 282–320 (GRYVSFENYSMRESLKLILSEERDNQTNHENEIKMENIN) are Cytoplasmic-facing.

Belongs to the G-protein coupled receptor 1 family.

The protein resides in the host cell membrane. This Vertebrata (FPV) protein is G-protein coupled receptor homolog FPV021.